A 396-amino-acid polypeptide reads, in one-letter code: Elongation factor Tu (396 aa).

Residues 10–206 (KPHVNIGTIG…ACDTYIPAPV (197 aa)) enclose the tr-type G domain. The interval 19–26 (GHVDHGKT) is G1. Residue 19-26 (GHVDHGKT) coordinates GTP. T26 lines the Mg(2+) pocket. The interval 60-64 (GITIS) is G2. The G3 stretch occupies residues 81-84 (DCPG). Residues 81 to 85 (DCPGH) and 136 to 139 (NKVD) each bind GTP. A G4 region spans residues 136-139 (NKVD). Residues 174 to 176 (SAL) form a G5 region.

This sequence belongs to the TRAFAC class translation factor GTPase superfamily. Classic translation factor GTPase family. EF-Tu/EF-1A subfamily. Monomer.

Its subcellular location is the cytoplasm. It catalyses the reaction GTP + H2O = GDP + phosphate + H(+). In terms of biological role, GTP hydrolase that promotes the GTP-dependent binding of aminoacyl-tRNA to the A-site of ribosomes during protein biosynthesis. The sequence is that of Elongation factor Tu from Bdellovibrio bacteriovorus (strain ATCC 15356 / DSM 50701 / NCIMB 9529 / HD100).